A 377-amino-acid polypeptide reads, in one-letter code: tRNA(Met) cytidine acetate ligase (377 aa).

ATP is bound by residues Ile7–His20, Gly100, Asn153, and Arg178.

It belongs to the TmcAL family.

The protein localises to the cytoplasm. It carries out the reaction cytidine(34) in elongator tRNA(Met) + acetate + ATP = N(4)-acetylcytidine(34) in elongator tRNA(Met) + AMP + diphosphate. Its function is as follows. Catalyzes the formation of N(4)-acetylcytidine (ac(4)C) at the wobble position of elongator tRNA(Met), using acetate and ATP as substrates. First activates an acetate ion to form acetyladenylate (Ac-AMP) and then transfers the acetyl group to tRNA to form ac(4)C34. This Staphylococcus epidermidis (strain ATCC 35984 / DSM 28319 / BCRC 17069 / CCUG 31568 / BM 3577 / RP62A) protein is tRNA(Met) cytidine acetate ligase.